We begin with the raw amino-acid sequence, 570 residues long: Vacuolar protein sorting-associated protein 45 (570 aa).

Phosphoserine occurs at positions 307 and 441.

It belongs to the STXBP/unc-18/SEC1 family. In terms of assembly, interacts with ZFYVE20. Interacts with STX6.

The protein localises to the golgi apparatus membrane. It localises to the endosome membrane. May play a role in vesicle-mediated protein trafficking from the Golgi stack through the trans-Golgi network. The polypeptide is Vacuolar protein sorting-associated protein 45 (Vps45) (Mus musculus (Mouse)).